Reading from the N-terminus, the 192-residue chain is Erythropoietin (192 aa).

Residues 1 to 26 form the signal peptide; sequence MGVPERPTLLLLLSLLLLPLGLPVLC. C33 and C187 are oxidised to a cystine. N-linked (GlcNAc...) asparagine glycans are attached at residues N50, N64, and N109.

Belongs to the EPO/TPO family. Produced by kidney or liver of adult mammals and by liver of fetal or neonatal mammals.

It localises to the secreted. Its function is as follows. Hormone involved in the regulation of erythrocyte proliferation and differentiation and the maintenance of a physiological level of circulating erythrocyte mass. Binds to EPOR leading to EPOR dimerization and JAK2 activation thereby activating specific downstream effectors, including STAT1 and STAT3. The sequence is that of Erythropoietin (EPO) from Alexandromys oeconomus (Tundra vole).